A 308-amino-acid chain; its full sequence is Serine/threonine-protein phosphatase 4 catalytic subunit (308 aa).

Mn(2+) contacts are provided by Asp51, His53, Asp79, and Asn111. His112 serves as the catalytic Proton donor. Residues His161 and His235 each coordinate Mn(2+). Leu308 carries the leucine methyl ester modification.

Belongs to the PPP phosphatase family. PP-4 (PP-X) subfamily. In terms of assembly, catalytic subunit of the histone H2A phosphatase complex (HTP-C) containing PPH3, PSY2 and PSY4. It depends on Mn(2+) as a cofactor.

It localises to the cytoplasm. The protein resides in the nucleus. It carries out the reaction O-phospho-L-seryl-[protein] + H2O = L-seryl-[protein] + phosphate. The catalysed reaction is O-phospho-L-threonyl-[protein] + H2O = L-threonyl-[protein] + phosphate. Forms the histone H2A phosphatase complex in association with the regulatory subunits PSY2 and PSY4, which dephosphorylates H2AS128ph (gamma-H2A) that has been displaced from sites of DNA lesions in the double-stranded DNA break repair process. Dephosphorylation is necessary for efficient recovery from the DNA damage checkpoint. The protein is Serine/threonine-protein phosphatase 4 catalytic subunit (PPH3) of Kluyveromyces lactis (strain ATCC 8585 / CBS 2359 / DSM 70799 / NBRC 1267 / NRRL Y-1140 / WM37) (Yeast).